Reading from the N-terminus, the 360-residue chain is MFTLLVDFADKISVFNVFRYITFRTGGALITSALIVFIFGPTIINSLRLRQGKGQPIRADGPQTHFKKAGTPTMGGLMILSGIIGSSLLWANLSSIYVWVVLLVTLGFGSIGFYDDYLKVTKQSHLGFSGKARLGLEFIIAGIAAWVIMHNGQAPFSSSLTFPFAKEFIINLGWFFIPFSCFVIVGAGNAVNLTDGLDGLAIVPIMIAAASFGVIAYLSGNAVFAEYLQIHFVPGTGELAVVLGAVIGAGLGFLWFNAPPAAIFMGDTGSLAMGGLIGTVAVATKHEIVLVIVGGLFVVEILSVIIQVGYFKMTGKRVFLMAPIHHHFEKLGWTESQVVIRFWIIAVILALVGLSTLKLR.

A run of 10 helical transmembrane segments spans residues 27–47 (GALI…INSL), 71–91 (TPTM…LLWA), 93–113 (LSSI…SIGF), 134–154 (LGLE…NGQA), 168–188 (FIIN…VGAG), 199–219 (GLAI…AYLS), 239–259 (LAVV…FNAP), 262–282 (AIFM…TVAV), 288–308 (IVLV…IIQV), and 337–357 (QVVI…LSTL).

The protein belongs to the glycosyltransferase 4 family. MraY subfamily. Requires Mg(2+) as cofactor.

It is found in the cell inner membrane. It catalyses the reaction UDP-N-acetyl-alpha-D-muramoyl-L-alanyl-gamma-D-glutamyl-meso-2,6-diaminopimeloyl-D-alanyl-D-alanine + di-trans,octa-cis-undecaprenyl phosphate = di-trans,octa-cis-undecaprenyl diphospho-N-acetyl-alpha-D-muramoyl-L-alanyl-D-glutamyl-meso-2,6-diaminopimeloyl-D-alanyl-D-alanine + UMP. It participates in cell wall biogenesis; peptidoglycan biosynthesis. Its function is as follows. Catalyzes the initial step of the lipid cycle reactions in the biosynthesis of the cell wall peptidoglycan: transfers peptidoglycan precursor phospho-MurNAc-pentapeptide from UDP-MurNAc-pentapeptide onto the lipid carrier undecaprenyl phosphate, yielding undecaprenyl-pyrophosphoryl-MurNAc-pentapeptide, known as lipid I. This chain is Phospho-N-acetylmuramoyl-pentapeptide-transferase, found in Mesorhizobium japonicum (strain LMG 29417 / CECT 9101 / MAFF 303099) (Mesorhizobium loti (strain MAFF 303099)).